The sequence spans 323 residues: Thymidylate synthase (323 aa).

DUMP is bound by residues Arg21 and 172–173 (RR). The active-site Nucleophile is Cys192. Residues 214–217 (RSND), Asn225, and 255–257 (HVY) contribute to the dUMP site. Asp217 is a (6R)-5,10-methylene-5,6,7,8-tetrahydrofolate binding site. Ala322 contacts (6R)-5,10-methylene-5,6,7,8-tetrahydrofolate.

It belongs to the thymidylate synthase family. Bacterial-type ThyA subfamily. In terms of assembly, homodimer.

It localises to the cytoplasm. It carries out the reaction dUMP + (6R)-5,10-methylene-5,6,7,8-tetrahydrofolate = 7,8-dihydrofolate + dTMP. It participates in pyrimidine metabolism; dTTP biosynthesis. Its function is as follows. Catalyzes the reductive methylation of 2'-deoxyuridine-5'-monophosphate (dUMP) to 2'-deoxythymidine-5'-monophosphate (dTMP) while utilizing 5,10-methylenetetrahydrofolate (mTHF) as the methyl donor and reductant in the reaction, yielding dihydrofolate (DHF) as a by-product. This enzymatic reaction provides an intracellular de novo source of dTMP, an essential precursor for DNA biosynthesis. The polypeptide is Thymidylate synthase (Bordetella parapertussis (strain 12822 / ATCC BAA-587 / NCTC 13253)).